The chain runs to 276 residues: Rhomboid protease GlpG (276 aa).

The next 6 helical transmembrane spans lie at 94–114 (GPVTWVMMIACVVVFIAMQIL), 142–162 (ALMHFSLMHILFNLLWWWYLG), 169–189 (LGSGKLIVITLISALLSGYVQ), 192–212 (FSGPWFGGLSGVVYALMGYVW), 229–249 (LIIFALIWIVAGWFDLFGMSM), and 250–270 (ANGAHIAGLAVGLAMAFVDSL). The active-site Nucleophile is the Ser201. His254 is a catalytic residue.

The protein belongs to the peptidase S54 family.

The protein localises to the cell inner membrane. The enzyme catalyses Cleaves type-1 transmembrane domains using a catalytic dyad composed of serine and histidine that are contributed by different transmembrane domains.. Functionally, rhomboid-type serine protease that catalyzes intramembrane proteolysis. The protein is Rhomboid protease GlpG of Escherichia coli O7:K1 (strain IAI39 / ExPEC).